Consider the following 189-residue polypeptide: 3-isopropylmalate dehydratase small subunit (189 aa).

This sequence belongs to the LeuD family. LeuD type 1 subfamily. Heterodimer of LeuC and LeuD.

The enzyme catalyses (2R,3S)-3-isopropylmalate = (2S)-2-isopropylmalate. Its pathway is amino-acid biosynthesis; L-leucine biosynthesis; L-leucine from 3-methyl-2-oxobutanoate: step 2/4. Its function is as follows. Catalyzes the isomerization between 2-isopropylmalate and 3-isopropylmalate, via the formation of 2-isopropylmaleate. The sequence is that of 3-isopropylmalate dehydratase small subunit from Francisella philomiragia subsp. philomiragia (strain ATCC 25017 / CCUG 19701 / FSC 153 / O#319-036).